Here is a 66-residue protein sequence, read N- to C-terminus: Large ribosomal subunit protein eL24 (66 aa).

Zn(2+)-binding residues include cysteine 7, cysteine 10, cysteine 33, and cysteine 37. The segment at 7 to 37 (CSYCGKPFEPGTGKMYVRNDGRVLFFCSRKC) adopts a C4-type zinc-finger fold.

The protein belongs to the eukaryotic ribosomal protein eL24 family. In terms of assembly, part of the 50S ribosomal subunit. Forms a cluster with proteins L3 and L14. Requires Zn(2+) as cofactor.

Its function is as follows. Binds to the 23S rRNA. The polypeptide is Large ribosomal subunit protein eL24 (Pyrococcus furiosus (strain ATCC 43587 / DSM 3638 / JCM 8422 / Vc1)).